Reading from the N-terminus, the 90-residue chain is Elongation factor 1-beta (90 aa).

Belongs to the EF-1-beta/EF-1-delta family.

Functionally, promotes the exchange of GDP for GTP in EF-1-alpha/GDP, thus allowing the regeneration of EF-1-alpha/GTP that could then be used to form the ternary complex EF-1-alpha/GTP/AAtRNA. The sequence is that of Elongation factor 1-beta from Sulfolobus acidocaldarius (strain ATCC 33909 / DSM 639 / JCM 8929 / NBRC 15157 / NCIMB 11770).